Reading from the N-terminus, the 371-residue chain is 4-hydroxy-3-methylbut-2-en-1-yl diphosphate synthase (flavodoxin) (371 aa).

Residues Cys272, Cys275, Cys307, and Glu314 each coordinate [4Fe-4S] cluster.

It belongs to the IspG family. It depends on [4Fe-4S] cluster as a cofactor.

It catalyses the reaction (2E)-4-hydroxy-3-methylbut-2-enyl diphosphate + oxidized [flavodoxin] + H2O + 2 H(+) = 2-C-methyl-D-erythritol 2,4-cyclic diphosphate + reduced [flavodoxin]. It participates in isoprenoid biosynthesis; isopentenyl diphosphate biosynthesis via DXP pathway; isopentenyl diphosphate from 1-deoxy-D-xylulose 5-phosphate: step 5/6. In terms of biological role, converts 2C-methyl-D-erythritol 2,4-cyclodiphosphate (ME-2,4cPP) into 1-hydroxy-2-methyl-2-(E)-butenyl 4-diphosphate. This chain is 4-hydroxy-3-methylbut-2-en-1-yl diphosphate synthase (flavodoxin), found in Pseudomonas paraeruginosa (strain DSM 24068 / PA7) (Pseudomonas aeruginosa (strain PA7)).